A 247-amino-acid chain; its full sequence is C-type lectin domain family 7 member A (247 aa).

At 1–44 the chain is on the cytoplasmic side; that stretch reads MEYHPDLENLDEDGYTQLHFDSQSNTRIAVVSEKGSCAASPPWR. Residues 15–18 carry the ITAM-like motif; that stretch reads YTQL. Residues 45 to 65 form a helical; Signal-anchor for type II membrane protein membrane-spanning segment; that stretch reads LIAVILGILCLVILVIAVVLG. Topologically, residues 66–247 are extracellular; sequence TMAIWRSNSG…YSICEKKFSM (182 aa). Residue N91 is glycosylated (N-linked (GlcNAc...) asparagine). 3 disulfide bridges follow: C120/C131, C148/C241, and C220/C233. The C-type lectin domain occupies 127–242; it reads YEKSCYLFSM…CSVPSYSICE (116 aa). A (1,3-beta-D-glucosyl)n-binding site is contributed by 146–153; sequence RQCWQLGS. K157, D159, and E163 together coordinate a divalent metal cation. E195 lines the (1,3-beta-D-glucosyl)n pocket. E242 contacts a divalent metal cation.

In terms of assembly, homodimer. Interacts with SYK; participates in leukocyte activation in presence of fungal pathogens. Interacts with CD37; this interaction controls CLEC7A-mediated IL-6 production. As to quaternary structure, interacts with RANBP9. Phosphorylated on tyrosine residues in response to beta-glucan binding. As to expression, highly expressed in peripheral blood leukocytes and dendritic cells. Detected in spleen, bone marrow, lung, muscle, stomach and placenta.

Its subcellular location is the cell membrane. It localises to the cytoplasm. Lectin that functions as a pattern recognizing receptor (PRR) specific for beta-1,3-linked and beta-1,6-linked glucans, which constitute cell wall constituents from pathogenic bacteria and fungi. Necessary for the TLR2-mediated inflammatory response and activation of NF-kappa-B: upon beta-glucan binding, recruits SYK via its ITAM motif and promotes a signaling cascade that activates some CARD domain-BCL10-MALT1 (CBM) signalosomes, leading to the activation of NF-kappa-B and MAP kinase p38 (MAPK11, MAPK12, MAPK13 and/or MAPK14) pathways which stimulate expression of genes encoding pro-inflammatory cytokines and chemokines. Enhances cytokine production in macrophages and dendritic cells. Mediates production of reactive oxygen species in the cell. Mediates phagocytosis of C.albicans conidia. Binds T-cells in a way that does not involve their surface glycans and plays a role in T-cell activation. Stimulates T-cell proliferation. Induces phosphorylation of SCIMP after binding beta-glucans. This is C-type lectin domain family 7 member A from Homo sapiens (Human).